Here is a 403-residue protein sequence, read N- to C-terminus: S-adenosylmethionine synthase (403 aa).

H16 is an ATP binding site. D18 serves as a coordination point for Mg(2+). E44 is a K(+) binding site. L-methionine-binding residues include E57 and Q100. Residues 100 to 110 (QSNDIAQGVDH) are flexible loop. ATP is bound by residues 167–169 (DAK), 238–239 (RF), D247, 253–254 (RK), A270, and K274. An L-methionine-binding site is contributed by D247. Position 278 (K278) interacts with L-methionine.

It belongs to the AdoMet synthase family. Homotetramer; dimer of dimers. Mg(2+) is required as a cofactor. K(+) serves as cofactor.

It is found in the cytoplasm. It catalyses the reaction L-methionine + ATP + H2O = S-adenosyl-L-methionine + phosphate + diphosphate. It functions in the pathway amino-acid biosynthesis; S-adenosyl-L-methionine biosynthesis; S-adenosyl-L-methionine from L-methionine: step 1/1. Functionally, catalyzes the formation of S-adenosylmethionine (AdoMet) from methionine and ATP. The overall synthetic reaction is composed of two sequential steps, AdoMet formation and the subsequent tripolyphosphate hydrolysis which occurs prior to release of AdoMet from the enzyme. The chain is S-adenosylmethionine synthase from Verminephrobacter eiseniae (strain EF01-2).